A 122-amino-acid polypeptide reads, in one-letter code: MHRLNKKAGDYGEKAAEIYLKKSGYTILNRNFRCFLGEVDIIAKNKDYITFVEVKSRWSDTYGLPCEAVNYRKKLKIYRTAKYYIASKSLINYNFRFDVIEVILNHQNDSYDLKFIENAFQI.

The protein belongs to the UPF0102 family.

The sequence is that of UPF0102 protein CA_C1763 from Clostridium acetobutylicum (strain ATCC 824 / DSM 792 / JCM 1419 / IAM 19013 / LMG 5710 / NBRC 13948 / NRRL B-527 / VKM B-1787 / 2291 / W).